An 82-amino-acid polypeptide reads, in one-letter code: Cobrotoxin-b (82 aa).

Positions 1–21 are cleaved as a signal peptide; it reads MKTLLLTLLVVTIVCLDLGYT. Disulfide bonds link Cys-24/Cys-44, Cys-38/Cys-61, Cys-63/Cys-74, and Cys-75/Cys-80.

The protein belongs to the three-finger toxin family. Short-chain subfamily. Type I alpha-neurotoxin sub-subfamily. Expressed by the venom gland.

Its subcellular location is the secreted. Its function is as follows. Binds to muscle nicotinic acetylcholine receptor (nAChR) and inhibit acetylcholine from binding to the receptor, thereby impairing neuromuscular transmission. Produces peripheral paralysis by blocking neuromuscular transmission at the postsynaptic site. Has a lower toxicity than cobrotoxin. In Naja atra (Chinese cobra), this protein is Cobrotoxin-b.